The primary structure comprises 293 residues: ELMO domain-containing protein 2 (293 aa).

In terms of domain architecture, ELMO spans 126–282; the sequence is QHEELLMKLW…KFHEKIKGLL (157 aa).

Alveolar cells (morphologically type II cells) and alveolar macrophages (at protein level). Expressed in brain, colon, heart, kidney, liver, lung, muscle, placenta, small intestine, spleen, stomach and testis. In lung it is expressed in alveolar macrophages and alveolar walls.

Its function is as follows. Acts as a GTPase-activating protein (GAP) toward guanine nucleotide exchange factors like ARL2, ARL3, ARF1 and ARF6, but not for GTPases outside the Arf family. Regulates IFN-related antiviral responses. The chain is ELMO domain-containing protein 2 (ELMOD2) from Homo sapiens (Human).